A 426-amino-acid polypeptide reads, in one-letter code: Glucose-6-phosphate isomerase (426 aa).

The active-site Proton donor is the E282. Active-site residues include H303 and K419.

The protein belongs to the GPI family.

The protein localises to the cytoplasm. The enzyme catalyses alpha-D-glucose 6-phosphate = beta-D-fructose 6-phosphate. The protein operates within carbohydrate biosynthesis; gluconeogenesis. Its pathway is carbohydrate degradation; glycolysis; D-glyceraldehyde 3-phosphate and glycerone phosphate from D-glucose: step 2/4. Its function is as follows. Catalyzes the reversible isomerization of glucose-6-phosphate to fructose-6-phosphate. The sequence is that of Glucose-6-phosphate isomerase from Mycoplasmoides gallisepticum (strain R(low / passage 15 / clone 2)) (Mycoplasma gallisepticum).